The sequence spans 838 residues: U1 SNP1-associating protein 1 (838 aa).

Topologically, residues 1–536 are cytoplasmic; the sequence is MSEYLAQTPC…VRPLRNSFPL (536 aa). The required for ERAD-L function stretch occupies residues 31–240; that stretch reads HPLSTVGRLL…DFAPAHNSFF (210 aa). In terms of domain architecture, Ubiquitin-like spans 259–318; that stretch reads ERFVLEFISDATLSITQMNVKPDTTVKQVKDFICSVYTHSLNLRRNDIKLIYKGQLLHEN. An important for HRD1 oligomer formation region spans residues 319 to 418; the sequence is NFAGNSSKIS…VPTDELYRKC (100 aa). The segment at 345-535 is interaction with HRD1; sequence QEYTESGPGF…VVRPLRNSFP (191 aa). 3 positions are modified to phosphoserine: Ser-374, Ser-376, and Ser-379. Residues 437–490 form a required for ERAD-L function and HRD1 oligomer formation region; the sequence is SSYLSVIKGDYGEIKIPISSNDYRINGDNILLSPSAIEQLESALNFKIERPRDS. Residues 537 to 559 traverse the membrane as a helical segment; sequence LLVLIRTFYLIGYNSLVPFFIIL. Over 560-563 the chain is Extracellular; sequence EFGS. Residues 564 to 583 form a helical membrane-spanning segment; sequence FLPWKYIILLSLLFIFRTVW. Residues 584 to 838 lie on the Cytoplasmic side of the membrane; it reads NTQEVWNLWR…QPHLYIPDED (255 aa). The interaction with DER1 stretch occupies residues 584–838; the sequence is NTQEVWNLWR…QPHLYIPDED (255 aa). The segment at 795-838 is disordered; the sequence is ARDREQPAPSAQQQENEDEALIIPDEEEPTATGAQPHLYIPDED. A compositionally biased stretch (acidic residues) spans 809-823; that stretch reads ENEDEALIIPDEEEP.

Component of the HRD1 ubiquitin ligase complex which contains the E3 ligase HRD1, its cofactors HRD3, USA1 and DER1, substrate recruiting factor YOS9 and CDC48-binding protein UBX2. Within the complex, interacts directly with HRD1 (via N-terminus) and DER1 (via C-terminus) and indirectly with HRD3. In ERAD-L, HRD3 and YOS9 jointly bind misfolded glycoproteins in the endoplasmic reticulum (ER) lumen. Movement of ERAD-L substrates through the ER membrane is facilitated by HRD1 and DER1 which have lateral gates facing each other and which distort the membrane region between the lateral gates, making it much thinner than a normal phospholipid bilayer. Substrates insert into the membrane as a hairpin loop with one strand interacting with DER1 and the other with HRD1. The HRD1 complex interacts with the heterotrimeric CDC48-NPL4-UFD1 ATPase complex which is recruited by UBX2 via its interaction with CDC48 and which moves ubiquitinated substrates to the cytosol for targeting to the proteasome.

It localises to the endoplasmic reticulum membrane. In terms of biological role, scaffold protein of the endoplasmic reticulum-associated degradation (ERAD) (also known as endoplasmic reticulum quality control, ERQC) pathway involved in ubiquitin-dependent degradation of misfolded endoplasmic reticulum proteins. Component of the HRD1 ubiquitin ligase complex, which is part of the ERAD-L and ERAD-M pathways responsible for the rapid degradation of soluble lumenal and membrane proteins with misfolded lumenal domains (ERAD-L), or ER-membrane proteins with misfolded transmembrane domains (ERAD-M). Has multiple functions in ERAD including recruitment of DER1 to the HRD1 ubiquitin ligase, and regulation of HRD1 activity. Involved in oligomerization of HRD1 and in HRD1 autoubiquitination and degradation. The protein is U1 SNP1-associating protein 1 (USA1) of Saccharomyces cerevisiae (strain ATCC 204508 / S288c) (Baker's yeast).